The sequence spans 152 residues: Large ribosomal subunit protein uL13 (152 aa).

Belongs to the universal ribosomal protein uL13 family. In terms of assembly, part of the 50S ribosomal subunit.

Functionally, this protein is one of the early assembly proteins of the 50S ribosomal subunit, although it is not seen to bind rRNA by itself. It is important during the early stages of 50S assembly. The chain is Large ribosomal subunit protein uL13 from Wolbachia pipientis subsp. Culex pipiens (strain wPip).